A 131-amino-acid chain; its full sequence is Profilin-6 (131 aa).

Cysteine 13 and cysteine 115 are disulfide-bonded. Positions 81 to 97 (AVIRGKKGSGGITVKKT) match the Involved in PIP2 interaction motif. Threonine 111 bears the Phosphothreonine mark.

The protein belongs to the profilin family. As to quaternary structure, occurs in many kinds of cells as a complex with monomeric actin in a 1:1 ratio. Phosphorylated by MAP kinases.

Its subcellular location is the cytoplasm. It is found in the cytoskeleton. Its function is as follows. Binds to actin and affects the structure of the cytoskeleton. At high concentrations, profilin prevents the polymerization of actin, whereas it enhances it at low concentrations. This is Profilin-6 from Zea mays (Maize).